The primary structure comprises 507 residues: Hippocampus abundant transcript-like protein 1 (507 aa).

A disordered region spans residues 1–27 (MSTDGESPEEPRWKAVASPKASTMPEK). Over 1 to 51 (MSTDGESPEEPRWKAVASPKASTMPEKRGSAQAASGSWLQGFGHPSVYHAA) the chain is Extracellular. Residues 52 to 72 (FVIFLEFFAWGLLTTPMLTVL) traverse the membrane as a helical segment. The Cytoplasmic segment spans residues 73–84 (HETFPQHTFLMN). A helical membrane pass occupies residues 85 to 105 (GLIQGVKGLLSFLSAPLIGAL). The Extracellular portion of the chain corresponds to 106–113 (SDVWGRKP). Residues 114–134 (FLLGTVFFTCFPIPLMRINPW) form a helical membrane-spanning segment. The Cytoplasmic portion of the chain corresponds to 135-136 (WY). The chain crosses the membrane as a helical span at residues 137-157 (FGMISVSGVFSVTFSVIFAYV). Topologically, residues 158–170 (ADFTQEHERSTAY) are extracellular. A helical membrane pass occupies residues 171–191 (GWVSATFAASLVSSPAIGTYL). Residues 192–198 (SANYGDS) are Cytoplasmic-facing. A helical transmembrane segment spans residues 199–219 (LVVLVATLVALLDICFILIAV). Residues 220-257 (PESLSEKIRPASWGAQISWKQADPFASLKKVGKDSTVL) are Extracellular-facing. Residues 258–278 (LICITVFLSYLPEAGQYSSFF) form a helical membrane-spanning segment. Topologically, residues 279-283 (LYLRQ) are cytoplasmic. Residues 284-304 (VIGFGSVKIVAFIAMVGILSI) traverse the membrane as a helical segment. The Extracellular portion of the chain corresponds to 305 to 323 (VAQTVFLSKLMRSLGNKNT). The chain crosses the membrane as a helical span at residues 324-344 (VLLGLGFQMLQLAWYGFGSQA). At 345–347 (WMM) the chain is on the cytoplasmic side. Residues 348 to 368 (WAAGTVAAMSSITFPAVSALI) form a helical membrane-spanning segment. Residues 369-389 (SRNAESDQQGVAQGIVTGIRG) are Extracellular-facing. Residues 390–410 (LCNGLGPALYGFIFYMFHVEL) form a helical membrane-spanning segment. Residues 411 to 430 (SELGPKLNSDDDPLQGAFIP) are Cytoplasmic-facing. Residues 431 to 451 (GPPFLFGACIVLMSFLVALFI) traverse the membrane as a helical segment. Topologically, residues 452–507 (PEYRKTSGVQKHNNSTSGSLSTPPERGSDEDIEPLLQDSSIWELSFEEPGNQCTEL) are extracellular. Residues 459 to 473 (GVQKHNNSTSGSLST) are compositionally biased toward polar residues. The interval 459–483 (GVQKHNNSTSGSLSTPPERGSDEDI) is disordered. N-linked (GlcNAc...) asparagine glycosylation is found at Asn464 and Asn465.

The protein belongs to the major facilitator superfamily.

It localises to the membrane. This chain is Hippocampus abundant transcript-like protein 1, found in Mus musculus (Mouse).